Here is a 245-residue protein sequence, read N- to C-terminus: uncharacterized protein (245 aa).

Positions 1–27 (MKLKKRVSMFLVALTMCGGLFVTPAKA) are cleaved as a signal peptide.

This is an uncharacterized protein from Bacillus subtilis (strain 168).